Consider the following 369-residue polypeptide: MATLDVNPQRYQQQLAEKVQRLTDMFAPYQAPELEVFESPDQHYRMRAEFRVWHEGEEMYYIMFNQETREKYRVDQFPAASRLINDLMPLLIDAMKDNESLRRKLFQVDFLSTLSGEILVSLLYHRQLDDAWIENAKALKQRLNDEGFNLNLIGRARKMKIVLDRDYVVEKLDVNGKPYTYQQVENSFTQPNGKVAEKMLEWAVDCTQESQGDLLELYCGNGNFSLALAQNFERVLATELAKPSVESAQYNIAANKIENVQIIRMSAEEFTEAMEGKREFRRLKDNGIDLKSYNCNTIFVDPPRSGMDVDTCKMVQGYERILYISCNPETLKENLDILSETHHITRFALFDQFPYTHHMEAGVMLERKA.

5 residues coordinate S-adenosyl-L-methionine: Q190, Y218, N223, E239, and D301. C326 functions as the Nucleophile in the catalytic mechanism. The active-site Proton acceptor is the E360.

It belongs to the class I-like SAM-binding methyltransferase superfamily. RNA M5U methyltransferase family. TrmA subfamily.

The catalysed reaction is uridine(54) in tRNA + S-adenosyl-L-methionine = 5-methyluridine(54) in tRNA + S-adenosyl-L-homocysteine + H(+). The enzyme catalyses uridine(341) in tmRNA + S-adenosyl-L-methionine = 5-methyluridine(341) in tmRNA + S-adenosyl-L-homocysteine + H(+). Its function is as follows. Dual-specificity methyltransferase that catalyzes the formation of 5-methyluridine at position 54 (m5U54) in all tRNAs, and that of position 341 (m5U341) in tmRNA (transfer-mRNA). This Vibrio vulnificus (strain CMCP6) protein is tRNA/tmRNA (uracil-C(5))-methyltransferase.